The following is a 357-amino-acid chain: Chorismate synthase (357 aa).

R47 lines the NADP(+) pocket. FMN is bound by residues 123 to 125, G281, 296 to 300, and R324; these read RAS and KPTSS.

Belongs to the chorismate synthase family. In terms of assembly, homotetramer. Requires FMNH2 as cofactor.

The catalysed reaction is 5-O-(1-carboxyvinyl)-3-phosphoshikimate = chorismate + phosphate. It functions in the pathway metabolic intermediate biosynthesis; chorismate biosynthesis; chorismate from D-erythrose 4-phosphate and phosphoenolpyruvate: step 7/7. In terms of biological role, catalyzes the anti-1,4-elimination of the C-3 phosphate and the C-6 proR hydrogen from 5-enolpyruvylshikimate-3-phosphate (EPSP) to yield chorismate, which is the branch point compound that serves as the starting substrate for the three terminal pathways of aromatic amino acid biosynthesis. This reaction introduces a second double bond into the aromatic ring system. This is Chorismate synthase from Chlamydia trachomatis serovar A (strain ATCC VR-571B / DSM 19440 / HAR-13).